Consider the following 140-residue polypeptide: MLEIDNQTPLESDFLLLEKIANVLAPTQIIELILVSGETMREINRDLRGCDYATDVLSFPLEAIPHTPLGSVVINVPLAQENALKLGHSLENEIALLFIHGVLHLLGYDHEKDKGEQRQKEGELIKAFNLPLSLIERTQD.

Histidine 100, histidine 104, and histidine 110 together coordinate Zn(2+).

The protein belongs to the endoribonuclease YbeY family. It depends on Zn(2+) as a cofactor.

The protein resides in the cytoplasm. Its function is as follows. Single strand-specific metallo-endoribonuclease involved in late-stage 70S ribosome quality control and in maturation of the 3' terminus of the 16S rRNA. The sequence is that of Endoribonuclease YbeY from Helicobacter pylori (strain P12).